The chain runs to 520 residues: MGDKAILTEVLEASNLTEAYVDLTAKQLIKEIRHVGDDFAVRYSNLDDRTELGEPTDQRSPDSEKTFTVDEAVEALGFGRFQLKLSILTGMAWMADAMEMMLLSLISPALACEWGISSVQQALVTTCVFSGMMLSSTFWGKICDRFGRRKGLTFSTLVACIMGVISGMSPHFYVLLFFRGLTGFGIGGVPQSVTLYAEFLPTAQRAKCVVLIESFWAIGAVFEALLAYFVMESFGWRALMFLSSLPLGIFAVASFWLPESARFDMASGHPERALETLQAAARMNRVQLPTGRLVSSTKAGSESRGDIANLLSPDLRKTTILLWCIWAITAFSYYGMVLFTTVLFQSHDECHGGLFSNGTQMEVCQPLTRSDYFDLLSTTLAEFPGLIITVLIIEWFGRKKTMALEYAVFAIFTFLLYFCLDRFTVTVLIFVARAFISGAFQCAYVYTPEVYPTTLRAVGLGTCSAMARIGAIVTPFIAQVASEKSLSLPIGIYGTAAILGLIASLSLPIETKGRQMMDSH.

The Cytoplasmic segment spans residues Met-1–Leu-85. The chain crosses the membrane as a helical span at residues Ser-86–Ile-106. At Ser-107–Gln-120 the chain is on the extracellular side. Residues Gln-121–Lys-141 traverse the membrane as a helical segment. The Cytoplasmic segment spans residues Ile-142–Leu-157. A helical membrane pass occupies residues Val-158–Phe-178. Residue Arg-179 is a topological domain, extracellular. Residues Gly-180–Leu-200 traverse the membrane as a helical segment. Over Pro-201–Cys-208 the chain is Cytoplasmic. A helical membrane pass occupies residues Val-209–Phe-229. Topologically, residues Val-230 to Arg-237 are extracellular. A helical transmembrane segment spans residues Ala-238–Pro-258. Topologically, residues Glu-259–Thr-319 are cytoplasmic. The chain crosses the membrane as a helical span at residues Ile-320–Thr-340. Residues Thr-341–Tyr-372 lie on the Extracellular side of the membrane. Residues Phe-373–Ile-393 traverse the membrane as a helical segment. The Cytoplasmic portion of the chain corresponds to Glu-394 to Ala-410. Residues Ile-411–Val-431 form a helical membrane-spanning segment. At Ala-432–Ala-434 the chain is on the extracellular side. The helical transmembrane segment at Phe-435–Leu-455 threads the bilayer. Topologically, residues Arg-456 to Gly-461 are cytoplasmic. A helical membrane pass occupies residues Thr-462–Ser-487. Topologically, residues Leu-488–Pro-489 are extracellular. A helical membrane pass occupies residues Ile-490–Ile-509. At Glu-510–His-520 the chain is on the cytoplasmic side.

This sequence belongs to the major facilitator superfamily.

Its subcellular location is the membrane. The protein is Putative transporter svop-1 of Caenorhabditis elegans.